The primary structure comprises 509 residues: Dihydrolipoyl dehydrogenase, mitochondrial (509 aa).

The N-terminal 35 residues, 1 to 35, are a transit peptide targeting the mitochondrion; sequence MQSWSRVYCSLAKRGHFNRISHGLQGVSSVPLRTY. An N6-acetyllysine; alternate modification is found at Lys-66. Lys-66 carries the N6-succinyllysine; alternate modification. Residues 71-80 and Lys-89 each bind FAD; that span reads EKNDTLGGTC. A disulfide bond links Cys-80 and Cys-85. Residues Lys-122, Lys-132, and Lys-143 each carry the N6-acetyllysine; alternate modification. Lys-122, Lys-132, and Lys-143 each carry N6-succinyllysine; alternate. Gly-154 serves as a coordination point for FAD. N6-succinyllysine is present on residues Lys-159 and Lys-166. Position 183 to 185 (183 to 185) interacts with FAD; it reads TGS. NAD(+)-binding positions include 220 to 227 and Glu-243; that span reads GAGVIGVE. Lys-273 and Lys-277 each carry N6-succinyllysine. Val-278 is an NAD(+) binding site. Phosphoserine occurs at positions 285 and 297. Residue Gly-314 participates in NAD(+) binding. Position 346 is an N6-acetyllysine (Lys-346). Residues Asp-355 and 361 to 364 each bind FAD; that span reads MLAH. N6-acetyllysine; alternate is present on Lys-410. N6-succinyllysine; alternate is present on Lys-410. An N6-acetyllysine mark is found at Lys-417 and Lys-420. The residue at position 430 (Lys-430) is an N6-succinyllysine. Residue His-487 is the Proton acceptor of the active site. At Ser-502 the chain carries Phosphoserine. The residue at position 505 (Lys-505) is an N6-acetyllysine; alternate. Lys-505 carries the post-translational modification N6-succinyllysine; alternate.

The protein belongs to the class-I pyridine nucleotide-disulfide oxidoreductase family. Homodimer. Part of the multimeric pyruvate dehydrogenase complex that contains multiple copies of pyruvate dehydrogenase (subunits PDHA (PDHA1 or PDHA2) and PDHB, E1), dihydrolipoamide acetyltransferase (DLAT, E2) and lipoamide dehydrogenase (DLD, E3). These subunits are bound to an inner core composed of about 48 DLAT and 12 PDHX molecules (by non covalent bonds). The 2-oxoglutarate dehydrogenase complex is composed of OGDH (2-oxoglutarate dehydrogenase; E1), DLST (dihydrolipoamide succinyltransferase; E2), DLD (dihydrolipoamide dehydrogenase; E3) and the assembly factor KGD4. It contains multiple copies of the three enzymatic components (E1, E2 and E3). In the nucleus, the 2-oxoglutarate dehydrogenase complex associates with KAT2A. Interacts with PDHX. FAD serves as cofactor. Tyrosine phosphorylated.

It is found in the mitochondrion matrix. It localises to the nucleus. Its subcellular location is the cell projection. The protein resides in the cilium. The protein localises to the flagellum. It is found in the cytoplasmic vesicle. It localises to the secretory vesicle. Its subcellular location is the acrosome. It catalyses the reaction N(6)-[(R)-dihydrolipoyl]-L-lysyl-[protein] + NAD(+) = N(6)-[(R)-lipoyl]-L-lysyl-[protein] + NADH + H(+). Its function is as follows. Lipoamide dehydrogenase is a component of the glycine cleavage system as well as an E3 component of three alpha-ketoacid dehydrogenase complexes (pyruvate-, alpha-ketoglutarate-, and branched-chain amino acid-dehydrogenase complex). The 2-oxoglutarate dehydrogenase complex is mainly active in the mitochondrion. A fraction of the 2-oxoglutarate dehydrogenase complex also localizes in the nucleus and is required for lysine succinylation of histones: associates with KAT2A on chromatin and provides succinyl-CoA to histone succinyltransferase KAT2A. In monomeric form may have additional moonlighting function as serine protease. Involved in the hyperactivation of spermatazoa during capacitation and in the spermatazoal acrosome reaction. This is Dihydrolipoyl dehydrogenase, mitochondrial (DLD) from Cricetulus griseus (Chinese hamster).